The primary structure comprises 266 residues: L-cystine-binding protein TcyJ (266 aa).

A signal peptide spans 1–29 (MKLAHLGRQALMGVMAVALVAGMSVKSFA).

It belongs to the bacterial solute-binding protein 3 family. As to quaternary structure, the complex is composed of two ATP-binding proteins (TcyN), two transmembrane proteins (TcyL) and a solute-binding protein (TcyJ).

It is found in the periplasm. In terms of biological role, part of the ABC transporter complex TcyJLN involved in L-cystine import. Binds cystine. In Escherichia coli O6:H1 (strain CFT073 / ATCC 700928 / UPEC), this protein is L-cystine-binding protein TcyJ.